A 248-amino-acid chain; its full sequence is Cutinase (248 aa).

Positions 1–17 (MRSLAILTTLLAGHAFA) are cleaved as a signal peptide. Positions 18 to 28 (YPKPAPQSVNR) are excised as a propeptide. The interval 31 to 70 (WPSINEFLSELAKVMPIGDTITAACDLISDGEDAAASLFG) is lid covering the active site of the uncomplexed enzyme. 2 disulfides stabilise this stretch: cysteine 55–cysteine 91 and cysteine 79–cysteine 153. Serine 164 acts as the Nucleophile in catalysis. A disulfide bridge links cysteine 212 with cysteine 219. Aspartate 216 is a catalytic residue. Histidine 229 acts as the Proton donor/acceptor in catalysis.

Belongs to the cutinase family.

The protein resides in the secreted. It catalyses the reaction cutin + H2O = cutin monomers.. With respect to regulation, weakly inhibited by n-undecyl phosphonate (C11Y4). Activity unaffected by paraoxon. Catalyzes the hydrolysis of complex carboxylic polyesters found in the cell wall of plants. Degrades cutin, a macromolecule that forms the structure of the plant cuticle. The polypeptide is Cutinase (Hypocrea jecorina (strain QM6a) (Trichoderma reesei)).